A 102-amino-acid polypeptide reads, in one-letter code: Large ribosomal subunit protein uL24 (102 aa).

This sequence belongs to the universal ribosomal protein uL24 family. Part of the 50S ribosomal subunit.

In terms of biological role, one of two assembly initiator proteins, it binds directly to the 5'-end of the 23S rRNA, where it nucleates assembly of the 50S subunit. Functionally, one of the proteins that surrounds the polypeptide exit tunnel on the outside of the subunit. The polypeptide is Large ribosomal subunit protein uL24 (Macrococcus caseolyticus (strain JCSC5402) (Macrococcoides caseolyticum)).